The primary structure comprises 254 residues: Serine acetyltransferase (254 aa).

The protein belongs to the transferase hexapeptide repeat family.

The protein localises to the cytoplasm. The catalysed reaction is L-serine + acetyl-CoA = O-acetyl-L-serine + CoA. It participates in amino-acid biosynthesis; L-cysteine biosynthesis; L-cysteine from L-serine: step 1/2. This chain is Serine acetyltransferase (cysE), found in Buchnera aphidicola subsp. Baizongia pistaciae (strain Bp).